The following is a 368-amino-acid chain: Glycolate oxidase 3 (368 aa).

Methionine 1 carries the post-translational modification N-acetylmethionine. The region spanning 1–359 (MEITNVMEYE…SRTHIKTDWD (359 aa)) is the FMN hydroxy acid dehydrogenase domain. Residue tyrosine 24 coordinates glyoxylate. FMN contacts are provided by residues 77-79 (PTA), serine 106, 127-129 (QLY), and threonine 155. A glyoxylate-binding site is contributed by tyrosine 129. Arginine 164 serves as a coordination point for glyoxylate. Residues lysine 230 and serine 252 each coordinate FMN. The glyoxylate site is built by histidine 254 and arginine 257. Catalysis depends on histidine 254, which acts as the Proton acceptor. FMN-binding positions include 285 to 289 (DGGVR) and 308 to 309 (GR).

This sequence belongs to the FMN-dependent alpha-hydroxy acid dehydrogenase family. Homotetramer. It depends on FMN as a cofactor.

It localises to the peroxisome. The catalysed reaction is glycolate + O2 = glyoxylate + H2O2. The protein operates within photosynthesis; photorespiration; glycine from 2-phosphoglycolate: step 2/3. In terms of biological role, catalyzes the oxidation of glycolate to glyoxylate, with a reduction of O2 to H2O2. Is a key enzyme in photorespiration in green plants. The chain is Glycolate oxidase 3 (GLO5) from Arabidopsis thaliana (Mouse-ear cress).